The following is a 219-amino-acid chain: Deoxyribose-phosphate aldolase (219 aa).

The Proton donor/acceptor role is filled by Asp89. Catalysis depends on Lys151, which acts as the Schiff-base intermediate with acetaldehyde. Lys180 (proton donor/acceptor) is an active-site residue.

It belongs to the DeoC/FbaB aldolase family. DeoC type 1 subfamily.

The protein localises to the cytoplasm. The catalysed reaction is 2-deoxy-D-ribose 5-phosphate = D-glyceraldehyde 3-phosphate + acetaldehyde. It functions in the pathway carbohydrate degradation; 2-deoxy-D-ribose 1-phosphate degradation; D-glyceraldehyde 3-phosphate and acetaldehyde from 2-deoxy-alpha-D-ribose 1-phosphate: step 2/2. Its function is as follows. Catalyzes a reversible aldol reaction between acetaldehyde and D-glyceraldehyde 3-phosphate to generate 2-deoxy-D-ribose 5-phosphate. This is Deoxyribose-phosphate aldolase from Clostridioides difficile (strain 630) (Peptoclostridium difficile).